Here is a 262-residue protein sequence, read N- to C-terminus: MIELEKLDFAKSVEGVEAFSTTRGQVDGRNAYSGVNLCDYVGDDALRVLDARLTLAMQLGVDLDDLVMPRQTHSCRVAVIDERFRALDIDEQEAALEGVDALVTRLQGIVIGVNTADCVPIVLVDSQAGIVAVSHAGWRGTVGRIAKAVVEEMCRQGATVDRIQAAMGPSICQDCFEVGDEVVEAFKKAHFNLNDIVVRNPATGKAHIDLRAANRAVLVAAGVPAANIVESQHCSRCEHTSFFSARRLGINSGRTFTGIYRK.

12 residues coordinate Cu cation: asparagine 36, tyrosine 40, methionine 68, histidine 73, cysteine 75, asparagine 114, cysteine 118, histidine 135, cysteine 172, cysteine 175, cysteine 234, and cysteine 237.

The protein belongs to the purine nucleoside phosphorylase YfiH/LACC1 family. Homodimer. It depends on Cu cation as a cofactor.

The catalysed reaction is adenosine + phosphate = alpha-D-ribose 1-phosphate + adenine. It carries out the reaction S-methyl-5'-thioadenosine + phosphate = 5-(methylsulfanyl)-alpha-D-ribose 1-phosphate + adenine. It catalyses the reaction inosine + phosphate = alpha-D-ribose 1-phosphate + hypoxanthine. The enzyme catalyses adenosine + H2O + H(+) = inosine + NH4(+). Functionally, purine nucleoside enzyme that catalyzes the phosphorolysis of adenosine and inosine nucleosides, yielding D-ribose 1-phosphate and the respective free bases, adenine and hypoxanthine. Also catalyzes the phosphorolysis of S-methyl-5'-thioadenosine into adenine and S-methyl-5-thio-alpha-D-ribose 1-phosphate. Also has adenosine deaminase activity. Also acts as a multicopper oxidase able to oxidize a wide variety of polyphenols and related compounds in vitro. Displays substrate preference as follows: syringaldazine &gt; 2,6-dimethoxyphenol &gt; veratryl alcohol &gt; guaiacol &gt; tetramethylbenzidine &gt; 4-methoxybenzyl alcohol &gt; 2,2'-azino-bis(3-ethylbenzthiazoline-6-sulfonic acid) (ABTS) &gt;&gt; phenol red &gt; 1-hydroxybenzotriazole. Cannot use 3,4-dimetoxybenzyl alcohol and violuric acid as substrates. As this enzyme is derived from a rumen microbial community, it may have a role in the digestion of complex plant materials such as ryegrass lignin. This chain is Adenosine deaminase RL5, found in Unknown prokaryotic organism.